The chain runs to 184 residues: Acetyl-CoA decarbonylase/synthase complex subunit epsilon 1 (184 aa).

It belongs to the CdhB family. In terms of assembly, heterotetramer of two alpha and two epsilon subunits. The ACDS complex is made up of alpha, epsilon, beta, gamma and delta subunits with a probable stoichiometry of (alpha(2)epsilon(2))(4)-beta(8)-(gamma(1)delta(1))(8).

Functionally, part of a complex that catalyzes the reversible cleavage of acetyl-CoA, allowing autotrophic growth from CO(2). The alpha-epsilon subcomponent functions as a carbon monoxide dehydrogenase. The precise role of the epsilon subunit is unclear; it may have a stabilizing role within the alpha(2)epsilon(2) component and/or be involved in electron transfer to FAD during a potential FAD-mediated CO oxidation. The polypeptide is Acetyl-CoA decarbonylase/synthase complex subunit epsilon 1 (cdhB1) (Archaeoglobus fulgidus (strain ATCC 49558 / DSM 4304 / JCM 9628 / NBRC 100126 / VC-16)).